The following is a 177-amino-acid chain: MSKSATSHFKRLPKGQNGGIELLLIHNVEHLGRQGDLVEVKAGYALNYLLPQGLATIATDHHKRMVEKHREKLRAIELEKLKSYREQADELAKQSITIEANANDEGHLYGSVGPHEIVDALKASGITLAQDQIRLEGPLKELGLYTVKIHLHSEVDASLKVWVVPTVAAEGGEPGAS.

It belongs to the bacterial ribosomal protein bL9 family.

In terms of biological role, binds to the 23S rRNA. This is Large ribosomal subunit protein bL9 from Rhodopirellula baltica (strain DSM 10527 / NCIMB 13988 / SH1).